The chain runs to 129 residues: Small ribosomal subunit protein uS11 (129 aa).

Belongs to the universal ribosomal protein uS11 family. Part of the 30S ribosomal subunit. Interacts with proteins S7 and S18. Binds to IF-3.

In terms of biological role, located on the platform of the 30S subunit, it bridges several disparate RNA helices of the 16S rRNA. Forms part of the Shine-Dalgarno cleft in the 70S ribosome. The protein is Small ribosomal subunit protein uS11 of Rhodopseudomonas palustris (strain BisB18).